Here is a 380-residue protein sequence, read N- to C-terminus: 1-deoxy-D-xylulose 5-phosphate reductoisomerase (380 aa).

NADPH-binding residues include Thr-9, Gly-10, Ser-11, Val-12, Arg-36, and Asn-117. Lys-118 is a binding site for 1-deoxy-D-xylulose 5-phosphate. Glu-119 serves as a coordination point for NADPH. Asp-139 serves as a coordination point for Mn(2+). 1-deoxy-D-xylulose 5-phosphate-binding residues include Ser-140, Glu-141, Ser-165, and His-188. Glu-141 is a Mn(2+) binding site. Gly-194 is an NADPH binding site. Residues Ser-201, Asn-206, Lys-207, and Glu-210 each coordinate 1-deoxy-D-xylulose 5-phosphate. Glu-210 serves as a coordination point for Mn(2+).

Belongs to the DXR family. Mg(2+) is required as a cofactor. It depends on Mn(2+) as a cofactor.

The enzyme catalyses 2-C-methyl-D-erythritol 4-phosphate + NADP(+) = 1-deoxy-D-xylulose 5-phosphate + NADPH + H(+). It functions in the pathway isoprenoid biosynthesis; isopentenyl diphosphate biosynthesis via DXP pathway; isopentenyl diphosphate from 1-deoxy-D-xylulose 5-phosphate: step 1/6. In terms of biological role, catalyzes the NADPH-dependent rearrangement and reduction of 1-deoxy-D-xylulose-5-phosphate (DXP) to 2-C-methyl-D-erythritol 4-phosphate (MEP). The polypeptide is 1-deoxy-D-xylulose 5-phosphate reductoisomerase (Aquifex aeolicus (strain VF5)).